The chain runs to 375 residues: G-protein coupled estrogen receptor 1 (375 aa).

Met1 is subject to N-acetylmethionine. Residues 1–62 (MAATTPAQDV…QQYVIALFLS (62 aa)) are Extracellular-facing. Asn32 and Asn44 each carry an N-linked (GlcNAc...) asparagine glycan. Residues 63-84 (CLYTIFLFPIGFVGNILILVVN) form a helical membrane-spanning segment. Topologically, residues 85 to 96 (ISFREKMTIPDL) are cytoplasmic. A helical membrane pass occupies residues 97-120 (YFINLAAADLILVADSLIEVFNLD). The Extracellular segment spans residues 121–132 (EQYYDIAVLCTF). The cysteines at positions 130 and 207 are disulfide-linked. A helical membrane pass occupies residues 133–153 (MSLFLQINMYSSVFFLTWMSF). Residues 154–175 (DRYLALAKAMRCGLFRTKHHAR) are Cytoplasmic-facing. A helical membrane pass occupies residues 176–194 (LSCGLIWMASVSATLVPFT). The Extracellular segment spans residues 195-220 (AVHLRHTEEACFCFADVREVQWLEVT). The helical transmembrane segment at 221–236 (LGFIVPFAIIGLCYSL) threads the bilayer. The Cytoplasmic portion of the chain corresponds to 237-259 (IVRALIRAHRHRGLRPRRQKALR). Residues 260–280 (MIFAVVLVFFICWLPENVFIS) form a helical membrane-spanning segment. Residues 281–306 (VHLLQWAQPGDTPCKQSFRHAYPLTG) lie on the Extracellular side of the membrane. A helical transmembrane segment spans residues 307-327 (HIVNLAAFSNSCLSPLIYSFL). The Cytoplasmic segment spans residues 328 to 375 (GETFRDKLRLYVAQKTSLPALNRFCHATLKAVIPDSTEQSDVKFSSAV).

Belongs to the G-protein coupled receptor 1 family. In terms of assembly, homodimer. Heterodimer; heterodimerizes with other G-protein-coupled receptor (GPCRs) like CRHR1, HTR1A and PAQR8. Interacts with RAMP3; the interaction confers proper subcellular localization and function in cardioprotection. Interacts with KRT7 and KRT8. Interacts with EGFR; the interaction increases after agonist-induced stimulation in cancer-associated fibroblasts (CAF). Interacts with EGFR and ESR1. Interacts (via C-terminus tail motif) with DLG4 (via N-terminus tandem pair of PDZ domains); the interaction is direct and induces the increase of GPER1 protein levels residing at the plasma membrane surface in a estradiol-independent manner. In terms of processing, ubiquitinated; ubiquitination occurs at the plasma membrane and leads to proteasome-mediated degradation. Post-translationally, glycosylated. In terms of tissue distribution, expressed in the brain. Expressed in neurons of the hippocampus, hypothalamic paraventricular nucleus (PVN), supraoptic nucleus (SON) and the median eminence. Expressed in magnocellular neurosecretory cells (MNCs) which secrete oxytocin but not in MNCs which secrete vasopressin. Expressed in glial cells. Expressed in the nucleus ambiguous. Expressed in epithelial cells, in pachytene spermatocytes (PS) (at protein level). Expressed strongly in vascular endothelial cells and poorly in vascular smooth muscle cells (VSMC). Expressed in the brain, lung, pituitary gland, adrenal medulla, renal pelvis and ovary. Expressed in CA1 hippocampus. Expressed weakly in heart, skeletal muscle and kidney.

It is found in the nucleus. The protein resides in the cytoplasm. The protein localises to the perinuclear region. It localises to the cytoskeleton. Its subcellular location is the cytoplasmic vesicle membrane. It is found in the cell membrane. The protein resides in the basolateral cell membrane. The protein localises to the endoplasmic reticulum membrane. It localises to the early endosome. Its subcellular location is the recycling endosome. It is found in the golgi apparatus. The protein resides in the trans-Golgi network. The protein localises to the golgi apparatus membrane. It localises to the cell projection. Its subcellular location is the dendrite. It is found in the dendritic spine membrane. The protein resides in the axon. The protein localises to the postsynaptic density. It localises to the mitochondrion membrane. Its function is as follows. G-protein coupled estrogen receptor that binds to 17-beta-estradiol (E2) with high affinity, leading to rapid and transient activation of numerous intracellular signaling pathways. Stimulates cAMP production, calcium mobilization and tyrosine kinase Src inducing the release of heparin-bound epidermal growth factor (HB-EGF) and subsequent transactivation of the epidermal growth factor receptor (EGFR), activating downstream signaling pathways such as PI3K/Akt and ERK/MAPK. Mediates pleiotropic functions among others in the cardiovascular, endocrine, reproductive, immune and central nervous systems. Has a role in cardioprotection by reducing cardiac hypertrophy and perivascular fibrosis in a RAMP3-dependent manner. Regulates arterial blood pressure by stimulating vasodilation and reducing vascular smooth muscle and microvascular endothelial cell proliferation. Plays a role in blood glucose homeostasis contributing to the insulin secretion response by pancreatic beta cells. Triggers mitochondrial apoptosis during pachytene spermatocyte differentiation. Stimulates uterine epithelial cell proliferation. Enhances uterine contractility in response to oxytocin. Contributes to thymic atrophy by inducing apoptosis. Attenuates TNF-mediated endothelial expression of leukocyte adhesion molecules. Promotes neuritogenesis in developing hippocampal neurons. Plays a role in acute neuroprotection against NMDA-induced excitotoxic neuronal death. Increases firing activity and intracellular calcium oscillations in luteinizing hormone-releasing hormone (LHRH) neurons. Inhibits early osteoblast proliferation at growth plate during skeletal development. Inhibits mature adipocyte differentiation and lipid accumulation. Involved in the recruitment of beta-arrestin 2 ARRB2 at the plasma membrane in epithelial cells. Also functions as a receptor for aldosterone mediating rapid regulation of vascular contractibility through the PI3K/ERK signaling pathway. Involved in cancer progression regulation. Stimulates cancer-associated fibroblast (CAF) proliferation by a rapid genomic response through the EGFR/ERK transduction pathway. Associated with EGFR, may act as a transcription factor activating growth regulatory genes (c-fos, cyclin D1). Promotes integrin alpha-5/beta-1 and fibronectin (FN) matrix assembly in breast cancer cells. This Rattus norvegicus (Rat) protein is G-protein coupled estrogen receptor 1 (Gper1).